Reading from the N-terminus, the 397-residue chain is Beta sliding clamp (397 aa).

This sequence belongs to the beta sliding clamp family. Forms a ring-shaped head-to-tail homodimer around DNA which binds and tethers DNA polymerases and other proteins to the DNA. The DNA replisome complex has a single clamp-loading complex (3 tau and 1 each of delta, delta', psi and chi subunits) which binds 3 Pol III cores (1 core on the leading strand and 2 on the lagging strand) each with a beta sliding clamp dimer. Additional proteins in the replisome are other copies of gamma, psi and chi, Ssb, DNA helicase and RNA primase.

The protein resides in the cytoplasm. Its function is as follows. Confers DNA tethering and processivity to DNA polymerases and other proteins. Acts as a clamp, forming a ring around DNA (a reaction catalyzed by the clamp-loading complex) which diffuses in an ATP-independent manner freely and bidirectionally along dsDNA. Initially characterized for its ability to contact the catalytic subunit of DNA polymerase III (Pol III), a complex, multichain enzyme responsible for most of the replicative synthesis in bacteria; Pol III exhibits 3'-5' exonuclease proofreading activity. The beta chain is required for initiation of replication as well as for processivity of DNA replication. This chain is Beta sliding clamp (dnaN), found in Mycolicibacterium smegmatis (strain ATCC 700084 / mc(2)155) (Mycobacterium smegmatis).